We begin with the raw amino-acid sequence, 456 residues long: Protein trichome birefringence-like 25 (456 aa).

A helical; Signal-anchor for type II membrane protein transmembrane segment spans residues 26–42 (QIFLKSVAFFLLIGLAY). The short motif at 172–174 (GDS) is the GDS motif element. The DCXHWCLPGXXDXWN motif signature appears at 426–440 (DCLHWCLPGPIDSWN).

The protein belongs to the PC-esterase family. TBL subfamily.

Its subcellular location is the membrane. Functionally, may be involved in the O-acetylation of mannan. May act as a bridging protein that binds pectin and other cell wall polysaccharides. Probably involved in maintaining esterification of pectins. The protein is Protein trichome birefringence-like 25 (TBL25) of Arabidopsis thaliana (Mouse-ear cress).